The primary structure comprises 414 residues: Esterase FrsA (414 aa).

The protein belongs to the FrsA family.

The enzyme catalyses a carboxylic ester + H2O = an alcohol + a carboxylate + H(+). Functionally, catalyzes the hydrolysis of esters. This Escherichia coli O8 (strain IAI1) protein is Esterase FrsA.